Reading from the N-terminus, the 365-residue chain is Transcription factor MYB93 (365 aa).

HTH myb-type domains follow at residues 9–61 (ENGL…TNYL) and 62–116 (RPDI…KKKL). 2 DNA-binding regions (H-T-H motif) span residues 37-61 (WRALPKLADLNRCGKSCRLRWTNYL) and 89-112 (WSAIATHLQGRTDNEIKNFWNTHL).

Interacts with FBX5.

The protein localises to the nucleus. The protein resides in the cytoplasm. In terms of biological role, transcription factor that acts as a negative regulator of lateral root (LR) development. Required for normal auxin responses during LR development. May be part of a negative feedback loop stimulated specifically in the endodermis upon LR initiation to ensure that LRs are formed only in the correct place. This Arabidopsis thaliana (Mouse-ear cress) protein is Transcription factor MYB93.